The chain runs to 380 residues: Alcohol dehydrogenase 1 (380 aa).

Residues C48, T50, H70, C100, C103, C106, C114, and C178 each coordinate Zn(2+). 2 residues coordinate an alcohol: T50 and H70. T50 provides a ligand contact to NAD(+). NAD(+) is bound by residues G203 to G208, D227, R232, T273, V296, V296 to V298, F323, and R373.

The protein belongs to the zinc-containing alcohol dehydrogenase family. As to quaternary structure, homodimer. Homotetramer. It depends on Zn(2+) as a cofactor.

Its subcellular location is the cytoplasm. It catalyses the reaction a primary alcohol + NAD(+) = an aldehyde + NADH + H(+). The enzyme catalyses a secondary alcohol + NAD(+) = a ketone + NADH + H(+). The chain is Alcohol dehydrogenase 1 (ADH1) from Solanum tuberosum (Potato).